Consider the following 334-residue polypeptide: Fructose-1,6-bisphosphatase class 1 (334 aa).

Residues glutamate 92, aspartate 114, leucine 116, and aspartate 117 each coordinate Mg(2+). Residues 117–120 (DGSS) and asparagine 209 contribute to the substrate site. Glutamate 281 lines the Mg(2+) pocket.

The protein belongs to the FBPase class 1 family. Homotetramer. Mg(2+) serves as cofactor.

It localises to the cytoplasm. The catalysed reaction is beta-D-fructose 1,6-bisphosphate + H2O = beta-D-fructose 6-phosphate + phosphate. The protein operates within carbohydrate biosynthesis; gluconeogenesis. This is Fructose-1,6-bisphosphatase class 1 from Nitrosomonas eutropha (strain DSM 101675 / C91 / Nm57).